The sequence spans 295 residues: Cop9 signalosome-interactor 1 (295 aa).

In terms of assembly, component of a COP9 signalosome-like (CSN) complex, composed of RRI1/CSN5, CSN9, RRI2/CSN10, PCI8/CSN11, CSN12 and CSI1. In the complex, it probably interacts directly with CSN9 and CSN12. Interacts also with RPN5.

Its subcellular location is the cytoplasm. The protein localises to the nucleus. Component of the COP9 signalosome (CSN) complex that acts as an regulator of the ubiquitin (Ubl) conjugation pathway by mediating the deneddylation of the cullin subunit of SCF-type E3 ubiquitin-protein ligase complexes The CSN complex is involved in the regulation of the mating pheromone response. This chain is Cop9 signalosome-interactor 1 (CSI1), found in Saccharomyces cerevisiae (strain ATCC 204508 / S288c) (Baker's yeast).